The primary structure comprises 313 residues: Probable cell division protein WhiA (313 aa).

Residues 275 to 308 constitute a DNA-binding region (H-T-H motif); the sequence is SLRELGELAQPPLSKSCVNHRLRKLEQIAEHILA.

Belongs to the WhiA family.

Its function is as follows. Involved in cell division and chromosome segregation. In Desulforudis audaxviator (strain MP104C), this protein is Probable cell division protein WhiA.